A 246-amino-acid chain; its full sequence is Acetoacetate decarboxylase (246 aa).

Lys116 serves as the catalytic Schiff-base intermediate with acetoacetate.

This sequence belongs to the ADC family.

It catalyses the reaction acetoacetate + H(+) = acetone + CO2. Functionally, catalyzes the conversion of acetoacetate to acetone and carbon dioxide. The sequence is that of Acetoacetate decarboxylase from Burkholderia vietnamiensis (strain G4 / LMG 22486) (Burkholderia cepacia (strain R1808)).